A 361-amino-acid chain; its full sequence is Probable dual-specificity RNA methyltransferase RlmN (361 aa).

Glutamate 91 functions as the Proton acceptor in the catalytic mechanism. The 233-residue stretch at 97-329 (QHYGLSVCVT…KKKGGNCVVR (233 aa)) folds into the Radical SAM core domain. A disulfide bond links cysteine 104 and cysteine 340. [4Fe-4S] cluster-binding residues include cysteine 111, cysteine 115, and cysteine 118. S-adenosyl-L-methionine is bound by residues 163-164 (GE), serine 195, 218-220 (SLH), and asparagine 296. The S-methylcysteine intermediate role is filled by cysteine 340.

Belongs to the radical SAM superfamily. RlmN family. [4Fe-4S] cluster is required as a cofactor.

It is found in the cytoplasm. The catalysed reaction is adenosine(2503) in 23S rRNA + 2 reduced [2Fe-2S]-[ferredoxin] + 2 S-adenosyl-L-methionine = 2-methyladenosine(2503) in 23S rRNA + 5'-deoxyadenosine + L-methionine + 2 oxidized [2Fe-2S]-[ferredoxin] + S-adenosyl-L-homocysteine. It carries out the reaction adenosine(37) in tRNA + 2 reduced [2Fe-2S]-[ferredoxin] + 2 S-adenosyl-L-methionine = 2-methyladenosine(37) in tRNA + 5'-deoxyadenosine + L-methionine + 2 oxidized [2Fe-2S]-[ferredoxin] + S-adenosyl-L-homocysteine. Functionally, specifically methylates position 2 of adenine 2503 in 23S rRNA and position 2 of adenine 37 in tRNAs. This is Probable dual-specificity RNA methyltransferase RlmN from Streptococcus pneumoniae (strain Hungary19A-6).